A 348-amino-acid chain; its full sequence is Histidinol-phosphate aminotransferase (348 aa).

The residue at position 210 (K210) is an N6-(pyridoxal phosphate)lysine.

Belongs to the class-II pyridoxal-phosphate-dependent aminotransferase family. Histidinol-phosphate aminotransferase subfamily. Homodimer. Pyridoxal 5'-phosphate serves as cofactor.

It catalyses the reaction L-histidinol phosphate + 2-oxoglutarate = 3-(imidazol-4-yl)-2-oxopropyl phosphate + L-glutamate. It functions in the pathway amino-acid biosynthesis; L-histidine biosynthesis; L-histidine from 5-phospho-alpha-D-ribose 1-diphosphate: step 7/9. In Pseudomonas putida (strain ATCC 700007 / DSM 6899 / JCM 31910 / BCRC 17059 / LMG 24140 / F1), this protein is Histidinol-phosphate aminotransferase.